Here is a 285-residue protein sequence, read N- to C-terminus: GTP-binding protein 8 (285 aa).

One can recognise an EngB-type G domain in the interval 110-283 (QQPEVCFIGR…KCFIADITGS (174 aa)). Residues 118 to 125 (GRSNVGKS), 147 to 151 (GHTKK), 165 to 168 (DMPG), 227 to 230 (TKID), and 262 to 264 (ISA) each bind GTP. The Mg(2+) site is built by serine 125 and threonine 149.

The protein belongs to the TRAFAC class TrmE-Era-EngA-EngB-Septin-like GTPase superfamily. EngB GTPase family. Mg(2+) serves as cofactor.

In Mus musculus (Mouse), this protein is GTP-binding protein 8 (Gtpbp8).